The primary structure comprises 506 residues: ATP synthase subunit alpha, mitochondrial (506 aa).

Residue glycine 171–threonine 178 coordinates ATP.

Belongs to the ATPase alpha/beta chains family. As to quaternary structure, F-type ATPases have 2 components, CF(1) - the catalytic core - and CF(0) - the membrane proton channel. CF(1) has five subunits: alpha(3), beta(3), gamma(1), delta(1), epsilon(1). CF(0) has three main subunits: a, b and c.

It is found in the mitochondrion. The protein localises to the mitochondrion inner membrane. Mitochondrial membrane ATP synthase (F(1)F(0) ATP synthase or Complex V) produces ATP from ADP in the presence of a proton gradient across the membrane which is generated by electron transport complexes of the respiratory chain. F-type ATPases consist of two structural domains, F(1) - containing the extramembraneous catalytic core, and F(0) - containing the membrane proton channel, linked together by a central stalk and a peripheral stalk. During catalysis, ATP synthesis in the catalytic domain of F(1) is coupled via a rotary mechanism of the central stalk subunits to proton translocation. Subunits alpha and beta form the catalytic core in F(1). Rotation of the central stalk against the surrounding alpha(3)beta(3) subunits leads to hydrolysis of ATP in three separate catalytic sites on the beta subunits. Subunit alpha does not bear the catalytic high-affinity ATP-binding sites. This is ATP synthase subunit alpha, mitochondrial (ATPA) from Beta vulgaris (Sugar beet).